The primary structure comprises 636 residues: Capsid vertex component 2 (636 aa).

The segment at 1–48 (MSLLHTFWRLPVAVFFEPHEENVLRCPERVLRRLLEDAAVAMRGGGWR) is interaction with major capsid protein/MCP. Residues 97-125 (DEGPSPRTLLQPPCRPRSSSPGTGVAGAS) form a disordered region.

The protein belongs to the herpesviridae CVC2 protein family. As to quaternary structure, heterodimerizes with CVC1. Interacts with major capsid protein/MCP and triplex capsid protein 1/TRX1 at the pentamer vertices. Interacts with the large tegument protein/LTP.

It localises to the virion. It is found in the host nucleus. Capsid vertex-specific component that plays a role during viral DNA encapsidation, assuring correct genome cleavage and presumably stabilizing capsids that contain full-length viral genomes. Participates in the interaction between the capsid and the tegument through interaction with the large tegument protein/LTP. This chain is Capsid vertex component 2, found in Homo sapiens (Human).